The sequence spans 86 residues: U15-lycotoxin-Ls1d (86 aa).

An N-terminal signal peptide occupies residues Met-1 to Ser-20. A WAP domain is found at Asp-21–Thr-66. 5 disulfides stabilise this stretch: Cys-24–Cys-54, Cys-32–Cys-58, Cys-41–Cys-53, Cys-42–Cys-80, and Cys-47–Cys-62.

The protein belongs to the venom protein 11 family. 01 (wap-1) subfamily. In terms of processing, contains 5 disulfide bonds. As to expression, expressed by the venom gland.

It is found in the secreted. Its function is as follows. Has antibacterial activity. The sequence is that of U15-lycotoxin-Ls1d from Lycosa singoriensis (Wolf spider).